The chain runs to 278 residues: tRNA(Phe) (4-demethylwyosine(37)-C(7)) aminocarboxypropyltransferase (278 aa).

S-adenosyl-L-methionine is bound by residues serine 109, arginine 116, glutamate 155, and 183 to 184 (DN).

The protein belongs to the class I-like SAM-binding methyltransferase superfamily. TRM5/TYW2 family.

The protein resides in the cytoplasm. The catalysed reaction is 4-demethylwyosine(37) in tRNA(Phe) + S-adenosyl-L-methionine = 4-demethyl-7-[(3S)-3-amino-3-carboxypropyl]wyosine(37) in tRNA(Phe) + S-methyl-5'-thioadenosine + H(+). Its function is as follows. S-adenosyl-L-methionine-dependent transferase that acts as a component of the wyosine derivatives biosynthesis pathway. Catalyzes the transfer of the alpha-amino-alpha-carboxypropyl (acp) group from S-adenosyl-L-methionine to 4-demethylwyosine (imG-14), forming 7-aminocarboxypropyl-demethylwyosine (wybutosine-86) at position 37 of tRNA(Phe). This Pyrococcus horikoshii (strain ATCC 700860 / DSM 12428 / JCM 9974 / NBRC 100139 / OT-3) protein is tRNA(Phe) (4-demethylwyosine(37)-C(7)) aminocarboxypropyltransferase.